Consider the following 51-residue polypeptide: MVAYWRQAGLSYIRYSQICAKAVRDALKTEFKANAMKTSGSTIKIVKVKKE.

Residues K21, K32, and K37 each carry the N6-acetyllysine; alternate modification. An N6-succinyllysine; alternate mark is found at K21, K32, and K37. K44 carries the post-translational modification N6-acetyllysine.

Belongs to the eukaryotic ATPase epsilon family. As to quaternary structure, component of the ATP synthase complex composed at least of ATP5F1A/subunit alpha, ATP5F1B/subunit beta, ATP5MC1/subunit c (homooctomer), MT-ATP6/subunit a, MT-ATP8/subunit 8, ATP5ME/subunit e, ATP5MF/subunit f, ATP5MG/subunit g, ATP5MK/subunit k, ATP5MJ/subunit j, ATP5F1C/subunit gamma, ATP5F1D/subunit delta, ATP5F1E/subunit epsilon, ATP5PF/subunit F6, ATP5PB/subunit b, ATP5PD/subunit d, ATP5PO/subunit OSCP. ATP synthase complex consists of a soluble F(1) head domain (subunits alpha(3) and beta(3)) - the catalytic core - and a membrane F(0) domain - the membrane proton channel (subunits c, a, 8, e, f, g, k and j). These two domains are linked by a central stalk (subunits gamma, delta, and epsilon) rotating inside the F1 region and a stationary peripheral stalk (subunits F6, b, d, and OSCP).

It is found in the mitochondrion. The protein localises to the mitochondrion inner membrane. In terms of biological role, subunit epsilon, of the mitochondrial membrane ATP synthase complex (F(1)F(0) ATP synthase or Complex V) that produces ATP from ADP in the presence of a proton gradient across the membrane which is generated by electron transport complexes of the respiratory chain. ATP synthase complex consist of a soluble F(1) head domain - the catalytic core - and a membrane F(1) domain - the membrane proton channel. These two domains are linked by a central stalk rotating inside the F(1) region and a stationary peripheral stalk. During catalysis, ATP synthesis in the catalytic domain of F(1) is coupled via a rotary mechanism of the central stalk subunits to proton translocation. In vivo, can only synthesize ATP although its ATP hydrolase activity can be activated artificially in vitro. May be essential for the assembly of F(1) and may play an important role in the incorporation of the hydrophobic subunit c into the F(1)-c oligomer rotor of the mitochondrial ATP synthase complex. The polypeptide is ATP synthase F(1) complex subunit epsilon, mitochondrial (Bos taurus (Bovine)).